The following is a 277-amino-acid chain: RNA-binding protein pno-1 (277 aa).

Disordered regions lie at residues 1 to 52 (MATS…KLVK) and 72 to 100 (DEDATADTADDSTGPKSSKRTKGVKGESR). A compositionally biased stretch (acidic residues) spans 8-27 (FDDELPMEEGMPELLDDEDV). Polar residues predominate over residues 30-40 (TLPSLLEQNLD). Over residues 72–81 (DEDATADTAD) the composition is skewed to acidic residues. The KH domain occupies 198-250 (GDHVSRAIGRIAGKDGRTKLVIENTTKTRIVVANTKIHILGAYQNLKLARNAV).

Belongs to the PNO1 family. Part of the small subunit (SSU) processome, composed of more than 70 proteins and the RNA chaperone small nucleolar RNA (snoRNA) U3.

It localises to the nucleus. The protein resides in the nucleolus. Part of the small subunit (SSU) processome, first precursor of the small eukaryotic ribosomal subunit. During the assembly of the SSU processome in the nucleolus, many ribosome biogenesis factors, an RNA chaperone and ribosomal proteins associate with the nascent pre-rRNA and work in concert to generate RNA folding, modifications, rearrangements and cleavage as well as targeted degradation of pre-ribosomal RNA by the RNA exosome. Positively regulates dimethylation of two adjacent adenosines in the loop of a conserved hairpin near the 3'-end of 18S rRNA. This is RNA-binding protein pno-1 from Caenorhabditis elegans.